The following is a 164-amino-acid chain: NADH-quinone oxidoreductase subunit I (164 aa).

4Fe-4S ferredoxin-type domains lie at 55 to 85 (LRRY…IDAE) and 95 to 124 (TRYD…EGPN). [4Fe-4S] cluster-binding residues include Cys65, Cys68, Cys71, Cys75, Cys104, Cys107, Cys110, and Cys114.

The protein belongs to the complex I 23 kDa subunit family. NDH-1 is composed of 14 different subunits. Subunits NuoA, H, J, K, L, M, N constitute the membrane sector of the complex. It depends on [4Fe-4S] cluster as a cofactor.

Its subcellular location is the cell inner membrane. It carries out the reaction a quinone + NADH + 5 H(+)(in) = a quinol + NAD(+) + 4 H(+)(out). In terms of biological role, NDH-1 shuttles electrons from NADH, via FMN and iron-sulfur (Fe-S) centers, to quinones in the respiratory chain. The immediate electron acceptor for the enzyme in this species is believed to be ubiquinone. Couples the redox reaction to proton translocation (for every two electrons transferred, four hydrogen ions are translocated across the cytoplasmic membrane), and thus conserves the redox energy in a proton gradient. This chain is NADH-quinone oxidoreductase subunit I, found in Jannaschia sp. (strain CCS1).